A 176-amino-acid chain; its full sequence is ATP synthase subunit delta (176 aa).

The protein belongs to the ATPase delta chain family. As to quaternary structure, F-type ATPases have 2 components, F(1) - the catalytic core - and F(0) - the membrane proton channel. F(1) has five subunits: alpha(3), beta(3), gamma(1), delta(1), epsilon(1). F(0) has three main subunits: a(1), b(2) and c(10-14). The alpha and beta chains form an alternating ring which encloses part of the gamma chain. F(1) is attached to F(0) by a central stalk formed by the gamma and epsilon chains, while a peripheral stalk is formed by the delta and b chains.

It localises to the cell inner membrane. Its function is as follows. F(1)F(0) ATP synthase produces ATP from ADP in the presence of a proton or sodium gradient. F-type ATPases consist of two structural domains, F(1) containing the extramembraneous catalytic core and F(0) containing the membrane proton channel, linked together by a central stalk and a peripheral stalk. During catalysis, ATP synthesis in the catalytic domain of F(1) is coupled via a rotary mechanism of the central stalk subunits to proton translocation. In terms of biological role, this protein is part of the stalk that links CF(0) to CF(1). It either transmits conformational changes from CF(0) to CF(1) or is implicated in proton conduction. The protein is ATP synthase subunit delta of Nitratiruptor sp. (strain SB155-2).